The following is a 338-amino-acid chain: MAIDVFYDDDADLSIIQGRKVAIIGYGSQGHAHAQNLRESGVEVVIGLREGSKSRAKAEEAGFTVKTNAEAAEWADVIMLLAPDTSQAKIFAEDIEPNLNDGDALFFGHGLNIHFKLIEPADNIIIGMVAPKGPGHLVRRQFVDGKGVPCLIAVEQDPKNNGRDLALSYAAAIGGARAGVIPTTFEAETVTDLFGEQAVLCGGTEELIKTGFEVLVEAGYEPEMAYFECLHEMKLIVDLMFEGGIANMNYSVSDTAEFGGYLSGPRVIDADTKKRMKDILTDIQDGTFTKRLVANVEGGNKELEELRASYNDHQIEKTGAKLRDLMSWVKVDARAETA.

Residues 3–183 (IDVFYDDDAD…GGARAGVIPT (181 aa)) form the KARI N-terminal Rossmann domain. NADP(+)-binding positions include 26-29 (YGSQ), arginine 49, serine 52, serine 54, and 84-87 (DTSQ). Histidine 109 is an active-site residue. Residue glycine 135 coordinates NADP(+). A KARI C-terminal knotted domain is found at 184–329 (TFEAETVTDL…AKLRDLMSWV (146 aa)). Residues aspartate 192, glutamate 196, glutamate 228, and glutamate 232 each contribute to the Mg(2+) site. Serine 253 contributes to the substrate binding site.

This sequence belongs to the ketol-acid reductoisomerase family. Mg(2+) serves as cofactor.

It carries out the reaction (2R)-2,3-dihydroxy-3-methylbutanoate + NADP(+) = (2S)-2-acetolactate + NADPH + H(+). The enzyme catalyses (2R,3R)-2,3-dihydroxy-3-methylpentanoate + NADP(+) = (S)-2-ethyl-2-hydroxy-3-oxobutanoate + NADPH + H(+). The protein operates within amino-acid biosynthesis; L-isoleucine biosynthesis; L-isoleucine from 2-oxobutanoate: step 2/4. It functions in the pathway amino-acid biosynthesis; L-valine biosynthesis; L-valine from pyruvate: step 2/4. Involved in the biosynthesis of branched-chain amino acids (BCAA). Catalyzes an alkyl-migration followed by a ketol-acid reduction of (S)-2-acetolactate (S2AL) to yield (R)-2,3-dihydroxy-isovalerate. In the isomerase reaction, S2AL is rearranged via a Mg-dependent methyl migration to produce 3-hydroxy-3-methyl-2-ketobutyrate (HMKB). In the reductase reaction, this 2-ketoacid undergoes a metal-dependent reduction by NADPH to yield (R)-2,3-dihydroxy-isovalerate. The sequence is that of Ketol-acid reductoisomerase (NADP(+)) from Corynebacterium jeikeium (strain K411).